Consider the following 41-residue polypeptide: Large ribosomal subunit protein bL36 (41 aa).

It belongs to the bacterial ribosomal protein bL36 family.

This is Large ribosomal subunit protein bL36 from Rickettsia canadensis (strain McKiel).